A 232-amino-acid polypeptide reads, in one-letter code: Large ribosomal subunit protein uL1 (232 aa).

The protein belongs to the universal ribosomal protein uL1 family. Part of the 50S ribosomal subunit.

Functionally, binds directly to 23S rRNA. The L1 stalk is quite mobile in the ribosome, and is involved in E site tRNA release. In terms of biological role, protein L1 is also a translational repressor protein, it controls the translation of the L11 operon by binding to its mRNA. The chain is Large ribosomal subunit protein uL1 from Bartonella quintana (strain Toulouse) (Rochalimaea quintana).